A 134-amino-acid polypeptide reads, in one-letter code: Cytochrome b5 (134 aa).

At Ala-2 the chain carries N-acetylalanine. An N6-acetyllysine mark is found at Lys-7, Lys-10, and Lys-19. The region spanning 9 to 85 (VKYYTLEEIK…SKTFIIGELH (77 aa)) is the Cytochrome b5 heme-binding domain. The heme site is built by His-44 and His-68. A helical membrane pass occupies residues 109 to 131 (WWTNWVIPAISALIVALMYRLYM).

This sequence belongs to the cytochrome b5 family.

The protein localises to the endoplasmic reticulum membrane. It localises to the microsome membrane. Functionally, cytochrome b5 is a membrane-bound hemoprotein functioning as an electron carrier for several membrane-bound oxygenases. The protein is Cytochrome b5 (CYB5A) of Oryctolagus cuniculus (Rabbit).